Here is a 303-residue protein sequence, read N- to C-terminus: Recombination-associated protein RdgC (303 aa).

Belongs to the RdgC family.

It localises to the cytoplasm. Its subcellular location is the nucleoid. In terms of biological role, may be involved in recombination. This Yersinia pseudotuberculosis serotype O:1b (strain IP 31758) protein is Recombination-associated protein RdgC.